We begin with the raw amino-acid sequence, 422 residues long: L-threonine dehydratase biosynthetic IlvA (422 aa).

Residue Lys56 is modified to N6-(pyridoxal phosphate)lysine. Residues Asn83, 189–193 (GGGGL), and Ser315 contribute to the pyridoxal 5'-phosphate site. Residues 339–413 (HYFILNFPQR…FDPSNIYINE (75 aa)) enclose the ACT-like domain.

The protein belongs to the serine/threonine dehydratase family. Homotetramer. The cofactor is pyridoxal 5'-phosphate.

The catalysed reaction is L-threonine = 2-oxobutanoate + NH4(+). The protein operates within amino-acid biosynthesis; L-isoleucine biosynthesis; 2-oxobutanoate from L-threonine: step 1/1. Functionally, catalyzes the anaerobic formation of alpha-ketobutyrate and ammonia from threonine in a two-step reaction. The first step involved a dehydration of threonine and a production of enamine intermediates (aminocrotonate), which tautomerizes to its imine form (iminobutyrate). Both intermediates are unstable and short-lived. The second step is the nonenzymatic hydrolysis of the enamine/imine intermediates to form 2-ketobutyrate and free ammonia. In the low water environment of the cell, the second step is accelerated by RidA. This Staphylococcus aureus (strain bovine RF122 / ET3-1) protein is L-threonine dehydratase biosynthetic IlvA (ilvA).